Here is a 369-residue protein sequence, read N- to C-terminus: Epoxyqueuosine reductase (369 aa).

The Proton donor role is filled by Asp-135. The 33-residue stretch at 177 to 209 (IPLPVDEPSENQCGKCTACITSCPTNAIVAEGV) folds into the 4Fe-4S ferredoxin-type domain. [4Fe-4S] cluster is bound by residues Cys-189, Cys-192, Cys-195, Cys-199, Cys-215, Cys-242, Cys-245, and Cys-249.

This sequence belongs to the QueG family. Monomer. Cob(II)alamin serves as cofactor. Requires [4Fe-4S] cluster as cofactor.

The protein localises to the cytoplasm. It catalyses the reaction epoxyqueuosine(34) in tRNA + AH2 = queuosine(34) in tRNA + A + H2O. It functions in the pathway tRNA modification; tRNA-queuosine biosynthesis. In terms of biological role, catalyzes the conversion of epoxyqueuosine (oQ) to queuosine (Q), which is a hypermodified base found in the wobble positions of tRNA(Asp), tRNA(Asn), tRNA(His) and tRNA(Tyr). In Vibrio cholerae serotype O1 (strain ATCC 39315 / El Tor Inaba N16961), this protein is Epoxyqueuosine reductase.